A 437-amino-acid polypeptide reads, in one-letter code: Tol-Pal system protein TolB (437 aa).

The N-terminal stretch at 1 to 23 is a signal peptide; that stretch reads MQKRHPIIYLLITLLIFVPVSYG.

Belongs to the TolB family. As to quaternary structure, the Tol-Pal system is composed of five core proteins: the inner membrane proteins TolA, TolQ and TolR, the periplasmic protein TolB and the outer membrane protein Pal. They form a network linking the inner and outer membranes and the peptidoglycan layer.

The protein resides in the periplasm. In terms of biological role, part of the Tol-Pal system, which plays a role in outer membrane invagination during cell division and is important for maintaining outer membrane integrity. The chain is Tol-Pal system protein TolB from Coxiella burnetii (strain RSA 493 / Nine Mile phase I).